A 342-amino-acid polypeptide reads, in one-letter code: N-acetyl-gamma-glutamyl-phosphate reductase (342 aa).

Cysteine 149 is a catalytic residue.

This sequence belongs to the NAGSA dehydrogenase family. Type 1 subfamily.

Its subcellular location is the cytoplasm. It catalyses the reaction N-acetyl-L-glutamate 5-semialdehyde + phosphate + NADP(+) = N-acetyl-L-glutamyl 5-phosphate + NADPH + H(+). The protein operates within amino-acid biosynthesis; L-arginine biosynthesis; N(2)-acetyl-L-ornithine from L-glutamate: step 3/4. Its function is as follows. Catalyzes the NADPH-dependent reduction of N-acetyl-5-glutamyl phosphate to yield N-acetyl-L-glutamate 5-semialdehyde. The protein is N-acetyl-gamma-glutamyl-phosphate reductase of Thiobacillus denitrificans (strain ATCC 25259 / T1).